The primary structure comprises 296 residues: GTPase Era (296 aa).

An Era-type G domain is found at 3–170 (KSGFVTIVGR…KELMFKYIPE (168 aa)). Positions 11-18 (GRPNVGKS) are G1. 11–18 (GRPNVGKS) contacts GTP. The interval 37–41 (QTTRN) is G2. A G3 region spans residues 58-61 (DTPG). GTP is bound by residues 58-62 (DTPGI) and 120-123 (NKID). Residues 120 to 123 (NKID) are G4. A G5 region spans residues 149–151 (ISA). A KH type-2 domain is found at 201–278 (LSEEVPHGIA…YIRLWVKVKE (78 aa)).

It belongs to the TRAFAC class TrmE-Era-EngA-EngB-Septin-like GTPase superfamily. Era GTPase family. Monomer.

It localises to the cytoplasm. Its subcellular location is the cell membrane. An essential GTPase that binds both GDP and GTP, with rapid nucleotide exchange. Plays a role in 16S rRNA processing and 30S ribosomal subunit biogenesis and possibly also in cell cycle regulation and energy metabolism. This is GTPase Era from Clostridium botulinum (strain Kyoto / Type A2).